We begin with the raw amino-acid sequence, 847 residues long: Ras GTPase-activating protein 2 (847 aa).

Residues methionine 1 to proline 18 are compositionally biased toward low complexity. Residues methionine 1–arginine 31 form a disordered region. Position 2 is an N-acetylalanine (alanine 2). C2 domains are found at residues glycine 19–phenylalanine 137 and valine 148–tyrosine 288. Residues asparagine 371–isoleucine 588 form the Ras-GAP domain. The residue at position 554 (serine 554) is a Phosphoserine. One can recognise a PH domain in the interval valine 603 to arginine 704. The Btk-type zinc finger occupies asparagine 706–glycine 742. The Zn(2+) site is built by histidine 714, cysteine 725, cysteine 726, and cysteine 736. The interval aspartate 819–serine 847 is disordered.

Widely expressed. Higher expression in brain, placenta, and kidney.

It is found in the cell membrane. Functionally, inhibitory regulator of the Ras-cyclic AMP pathway. May bind inositol tetrakisphosphate (IP4) and phospholipids. The protein is Ras GTPase-activating protein 2 (Rasa2) of Rattus norvegicus (Rat).